Reading from the N-terminus, the 333-residue chain is Ubiquinol oxidase 2, mitochondrial (333 aa).

Residues 158-178 (AMMLETVAAVPGMVGGMLLHL) traverse the membrane as a helical segment. Glu162, Glu201, and His204 together coordinate Fe cation. Residues 220-240 (LLVLAVQGVFFNAFFVLYILS) form a helical membrane-spanning segment. 3 residues coordinate Fe cation: Glu252, Glu303, and His306.

It belongs to the alternative oxidase family. Homodimer; disulfide-linked. The cofactor is Fe cation.

It localises to the mitochondrion inner membrane. The enzyme catalyses 2 a ubiquinol + O2 = 2 a ubiquinone + 2 H2O. In terms of biological role, catalyzes the cyanide-resistant oxidation of ubiquinol and the reduction of molecular oxygen to water, but does not translocate protons and consequently is not linked to oxidative phosphorylation. May increase respiration when the cytochrome respiratory pathway is restricted, or in response to low temperatures. This chain is Ubiquinol oxidase 2, mitochondrial (AOX2), found in Glycine max (Soybean).